We begin with the raw amino-acid sequence, 566 residues long: Arginine--tRNA ligase (566 aa).

The 'HIGH' region signature appears at 124-134; that stretch reads ANPNGPLHIGH.

The protein belongs to the class-I aminoacyl-tRNA synthetase family.

Its subcellular location is the cytoplasm. The catalysed reaction is tRNA(Arg) + L-arginine + ATP = L-arginyl-tRNA(Arg) + AMP + diphosphate. In Methanocaldococcus jannaschii (strain ATCC 43067 / DSM 2661 / JAL-1 / JCM 10045 / NBRC 100440) (Methanococcus jannaschii), this protein is Arginine--tRNA ligase (argS).